A 474-amino-acid polypeptide reads, in one-letter code: tRNA-2-methylthio-N(6)-dimethylallyladenosine synthase (474 aa).

The region spanning 3–120 (KKLHIKTWGC…LPEMINSVRG (118 aa)) is the MTTase N-terminal domain. Cysteine 12, cysteine 49, cysteine 83, cysteine 157, cysteine 161, and cysteine 164 together coordinate [4Fe-4S] cluster. Residues 143–375 (RAEGPTAFVS…QERINQQAMA (233 aa)) enclose the Radical SAM core domain. The 64-residue stretch at 378–441 (RRMLGTVQRI…TNSLRGKIVR (64 aa)) folds into the TRAM domain.

This sequence belongs to the methylthiotransferase family. MiaB subfamily. Monomer. [4Fe-4S] cluster serves as cofactor.

It is found in the cytoplasm. It catalyses the reaction N(6)-dimethylallyladenosine(37) in tRNA + (sulfur carrier)-SH + AH2 + 2 S-adenosyl-L-methionine = 2-methylsulfanyl-N(6)-dimethylallyladenosine(37) in tRNA + (sulfur carrier)-H + 5'-deoxyadenosine + L-methionine + A + S-adenosyl-L-homocysteine + 2 H(+). Its function is as follows. Catalyzes the methylthiolation of N6-(dimethylallyl)adenosine (i(6)A), leading to the formation of 2-methylthio-N6-(dimethylallyl)adenosine (ms(2)i(6)A) at position 37 in tRNAs that read codons beginning with uridine. In Klebsiella pneumoniae subsp. pneumoniae (strain ATCC 700721 / MGH 78578), this protein is tRNA-2-methylthio-N(6)-dimethylallyladenosine synthase.